We begin with the raw amino-acid sequence, 709 residues long: Elongation factor G (709 aa).

A tr-type G domain is found at 8 to 297 (ANTRNIGIMA…AVIDYLPSPL (290 aa)). GTP-binding positions include 17 to 24 (AHVDAGKT), 81 to 85 (DTPGH), and 135 to 138 (NKMD).

This sequence belongs to the TRAFAC class translation factor GTPase superfamily. Classic translation factor GTPase family. EF-G/EF-2 subfamily.

The protein localises to the cytoplasm. In terms of biological role, catalyzes the GTP-dependent ribosomal translocation step during translation elongation. During this step, the ribosome changes from the pre-translocational (PRE) to the post-translocational (POST) state as the newly formed A-site-bound peptidyl-tRNA and P-site-bound deacylated tRNA move to the P and E sites, respectively. Catalyzes the coordinated movement of the two tRNA molecules, the mRNA and conformational changes in the ribosome. The sequence is that of Elongation factor G from Lactococcus lactis subsp. lactis (strain IL1403) (Streptococcus lactis).